The sequence spans 229 residues: Clathrin light chain (229 aa).

Disordered stretches follow at residues 1–24 and 76–132; these read MSQF…DSKN and EMQA…KLRE. Over residues 107 to 132 the composition is skewed to basic and acidic residues; it reads EPVRKWKEDQMKRIQERDESSKKLRE. The residue at position 229 (serine 229) is a Phosphoserine.

Belongs to the clathrin light chain family. In terms of assembly, clathrin coats are formed from molecules containing 3 heavy chains and 3 light chains.

It localises to the cytoplasmic vesicle membrane. The protein localises to the membrane. The protein resides in the coated pit. Functionally, clathrin is the major protein of the polyhedral coat of coated pits and vesicles. This is Clathrin light chain (clc1) from Schizosaccharomyces pombe (strain 972 / ATCC 24843) (Fission yeast).